The chain runs to 197 residues: Imidazoleglycerol-phosphate dehydratase (197 aa).

The protein belongs to the imidazoleglycerol-phosphate dehydratase family.

It localises to the cytoplasm. The catalysed reaction is D-erythro-1-(imidazol-4-yl)glycerol 3-phosphate = 3-(imidazol-4-yl)-2-oxopropyl phosphate + H2O. It participates in amino-acid biosynthesis; L-histidine biosynthesis; L-histidine from 5-phospho-alpha-D-ribose 1-diphosphate: step 6/9. This is Imidazoleglycerol-phosphate dehydratase from Nitrosococcus oceani (strain ATCC 19707 / BCRC 17464 / JCM 30415 / NCIMB 11848 / C-107).